The chain runs to 535 residues: CTP synthase (535 aa).

The interval 1-267 is amidoligase domain; the sequence is MTKYIFVTGG…DQIVCDHLKL (267 aa). Ser13 lines the CTP pocket. Ser13 lines the UTP pocket. 14–19 provides a ligand contact to ATP; it reads SLGKGI. Tyr54 provides a ligand contact to L-glutamine. Asp71 is an ATP binding site. The Mg(2+) site is built by Asp71 and Glu141. CTP is bound by residues 148–150, 188–193, and Lys224; these read DIE and KTKPTQ. UTP contacts are provided by residues 188-193 and Lys224; that span reads KTKPTQ. 240-242 is an ATP binding site; the sequence is RDA. A Glutamine amidotransferase type-1 domain is found at 292–534; sequence KIALVGKYVE…VSASITNKES (243 aa). Gly354 lines the L-glutamine pocket. Cys381 acts as the Nucleophile; for glutamine hydrolysis in catalysis. L-glutamine-binding positions include 382-385, Glu405, and Arg462; that span reads LGMQ. Residues His507 and Glu509 contribute to the active site.

Belongs to the CTP synthase family. Homotetramer.

It carries out the reaction UTP + L-glutamine + ATP + H2O = CTP + L-glutamate + ADP + phosphate + 2 H(+). It catalyses the reaction L-glutamine + H2O = L-glutamate + NH4(+). The catalysed reaction is UTP + NH4(+) + ATP = CTP + ADP + phosphate + 2 H(+). It functions in the pathway pyrimidine metabolism; CTP biosynthesis via de novo pathway; CTP from UDP: step 2/2. Its activity is regulated as follows. Allosterically activated by GTP, when glutamine is the substrate; GTP has no effect on the reaction when ammonia is the substrate. The allosteric effector GTP functions by stabilizing the protein conformation that binds the tetrahedral intermediate(s) formed during glutamine hydrolysis. Inhibited by the product CTP, via allosteric rather than competitive inhibition. Catalyzes the ATP-dependent amination of UTP to CTP with either L-glutamine or ammonia as the source of nitrogen. Regulates intracellular CTP levels through interactions with the four ribonucleotide triphosphates. This Bacillus mycoides (strain KBAB4) (Bacillus weihenstephanensis) protein is CTP synthase.